The chain runs to 134 residues: Small ribosomal subunit protein uS8c (134 aa).

Belongs to the universal ribosomal protein uS8 family. In terms of assembly, part of the 30S ribosomal subunit.

The protein resides in the plastid. It localises to the chloroplast. Its function is as follows. One of the primary rRNA binding proteins, it binds directly to 16S rRNA central domain where it helps coordinate assembly of the platform of the 30S subunit. The protein is Small ribosomal subunit protein uS8c (rps8) of Coffea arabica (Arabian coffee).